Here is a 154-residue protein sequence, read N- to C-terminus: uncharacterized protein (154 aa).

Helical transmembrane passes span 5-24, 29-48, 53-75, 87-109, and 124-146; these read TLII…GVLL, FYAA…IYAA, PVVV…AIAA, IFWV…SMAV, and ATDY…LSAI.

It localises to the cell membrane. This is an uncharacterized protein from Archaeoglobus fulgidus (strain ATCC 49558 / DSM 4304 / JCM 9628 / NBRC 100126 / VC-16).